A 181-amino-acid chain; its full sequence is Inner membrane-spanning protein YciB (181 aa).

The next 5 helical transmembrane spans lie at 3-23 (LLFD…FGIY), 54-74 (SLAI…PWFI), 81-101 (IYWL…KPLI), 119-139 (LNLA…YVAY), and 149-169 (FKLF…AFYL).

The protein belongs to the YciB family.

The protein localises to the cell inner membrane. Functionally, plays a role in cell envelope biogenesis, maintenance of cell envelope integrity and membrane homeostasis. This chain is Inner membrane-spanning protein YciB, found in Legionella pneumophila subsp. pneumophila (strain Philadelphia 1 / ATCC 33152 / DSM 7513).